The following is a 362-amino-acid chain: Probable dual-specificity RNA methyltransferase RlmN (362 aa).

Glu105 (proton acceptor) is an active-site residue. The Radical SAM core domain maps to 111-344 (HEYGNSICVT…VTIRREQGHD (234 aa)). Cysteines 118 and 349 form a disulfide. [4Fe-4S] cluster is bound by residues Cys125, Cys129, and Cys132. S-adenosyl-L-methionine contacts are provided by residues 175 to 176 (GE), Ser207, 230 to 232 (SLH), and Asn306. Cys349 functions as the S-methylcysteine intermediate in the catalytic mechanism.

Belongs to the radical SAM superfamily. RlmN family. The cofactor is [4Fe-4S] cluster.

Its subcellular location is the cytoplasm. The enzyme catalyses adenosine(2503) in 23S rRNA + 2 reduced [2Fe-2S]-[ferredoxin] + 2 S-adenosyl-L-methionine = 2-methyladenosine(2503) in 23S rRNA + 5'-deoxyadenosine + L-methionine + 2 oxidized [2Fe-2S]-[ferredoxin] + S-adenosyl-L-homocysteine. It catalyses the reaction adenosine(37) in tRNA + 2 reduced [2Fe-2S]-[ferredoxin] + 2 S-adenosyl-L-methionine = 2-methyladenosine(37) in tRNA + 5'-deoxyadenosine + L-methionine + 2 oxidized [2Fe-2S]-[ferredoxin] + S-adenosyl-L-homocysteine. Its function is as follows. Specifically methylates position 2 of adenine 2503 in 23S rRNA and position 2 of adenine 37 in tRNAs. The polypeptide is Probable dual-specificity RNA methyltransferase RlmN (Bacillus anthracis (strain CDC 684 / NRRL 3495)).